A 424-amino-acid polypeptide reads, in one-letter code: Histidine--tRNA ligase (424 aa).

The protein belongs to the class-II aminoacyl-tRNA synthetase family. In terms of assembly, homodimer.

Its subcellular location is the cytoplasm. It carries out the reaction tRNA(His) + L-histidine + ATP = L-histidyl-tRNA(His) + AMP + diphosphate + H(+). The sequence is that of Histidine--tRNA ligase from Salmonella typhi.